Consider the following 359-residue polypeptide: Protein mab-21-like 2 (359 aa).

Belongs to the mab-21 family.

It is found in the nucleus. It localises to the cytoplasm. Functionally, required for several aspects of embryonic development including normal development of the eye. In Xenopus tropicalis (Western clawed frog), this protein is Protein mab-21-like 2 (mab21l2).